Consider the following 449-residue polypeptide: PGL/p-HBAD biosynthesis rhamnosyltransferase (449 aa).

Belongs to the glycosyltransferase 28 family.

Functionally, catalyzes the transfer of the first rhamnosyl residue on p-hydroxybenzoic acid or phenolphthiocerol derivatives to form, after O-methylation at position 2 of the sugar unit, mono-O-methyl-glycosyl-p-hydroxybenzoic acid derivative (p-HBAD I) and 2-O-methyl-rhamnosyl-phenolphthiocerol dimycocerosate (also called mycoside B) during p-hydroxybenzoic acid derivatives (p-HBAD) and glycosylated phenolphthiocerol dimycocerosates (PGL) biosynthesis. The protein is PGL/p-HBAD biosynthesis rhamnosyltransferase of Mycobacterium bovis (strain BCG / Pasteur 1173P2).